The sequence spans 259 residues: Putative zinc metalloprotease Rip2 (259 aa).

2 helical membrane-spanning segments follow: residues 14–34 (PIFLGLLGLTAVGGALAWLAG) and 39–59 (PLAYAGVFVMVIAGWLVSLCL). Residue His60 coordinates Zn(2+). Glu61 is an active-site residue. His64 is a binding site for Zn(2+). The next 4 membrane-spanning stretches (helical) occupy residues 97–117 (GLPMLFIALGGIGLPGAAVYV), 128–148 (TLVSLAGPTVNLALAMLLLAA), 156–176 (IHAVLWAGVAFLAFLQLTALV), and 211–231 (LVFLLVLFLAPTLNGWFFGVV).

The protein belongs to the peptidase M50B family. Zn(2+) serves as cofactor.

Its subcellular location is the cell membrane. This chain is Putative zinc metalloprotease Rip2 (rip2), found in Mycobacterium tuberculosis (strain ATCC 25618 / H37Rv).